An 803-amino-acid chain; its full sequence is Rho guanine nucleotide exchange factor 7 (803 aa).

Met-1 bears the N-acetylmethionine mark. One can recognise a Calponin-homology (CH) domain in the interval 1 to 133 (MNSAEQTVTW…SLVTLNKVTA (133 aa)). Asn-2 carries the post-translational modification N-acetylthreonine. Residues Ser-153 and Ser-176 each carry the phosphoserine modification. The SH3 domain maps to 184–243 (NNQLVVRAKFNFQQTNEDELSFSKGDVIHVTRVEEGGWWEGTLNGRTGWFPSNYVREVKA). Residues Ser-249 and Ser-257 each carry the phosphoserine modification. Residues 271-451 (YYNVVLQNIL…KNLSAQCQEV (181 aa)) enclose the DH domain. One can recognise a PH domain in the interval 473-578 (DIKTLGNVTY…WVEHLQKQTK (106 aa)). Ser-518, Cys-560, and Val-579 each carry phosphoserine. The segment at 580–655 (TSVGNPTIKP…TPKPWSLSCL (76 aa)) is disordered. Positions 593–606 (PSHTLPSHPVTPSS) are enriched in polar residues. Residues Lys-645 and Ser-664 each carry the phosphoserine modification. Residues 678–690 (KTMKKLLPKRKPE) are compositionally biased toward basic residues. Disordered stretches follow at residues 678-704 (KTMK…RKST) and 748-773 (DDQP…LSED). A compositionally biased stretch (basic and acidic residues) spans 691 to 700 (RKPSDEEFAS). A Phosphoserine; by CaMK1 modification is found at Ser-694. Residues 752–765 (SLDSLGRRSSLSRL) show a composition bias toward low complexity.

As to quaternary structure, interacts with PAK kinases through the SH3 domain. Interacts with GIT1 and TGFB1I1. Interacts with PTK2/FAK1 and RAC1. Interacts with ITCH and PARVB. Interacts with unphosphorylated PAK1. Interacts with SCRIB; interaction is direct and may play a role in regulation of apoptosis. Interacts with FRMPD4 (via N-terminus). Interacts with CaMK1. Interacts with BIN2. Interacts with YWHAZ. Interacts (via PH domain) with NOX1 (via FAD-binding FR-type domain). Interacts with SNX27. In terms of processing, phosphorylated by PTK2/FAK1; this promotes interaction with RAC1. Phosphorylated on Ser-694 by CaMK1; enhancement of GEF activity and downstream activation of RAC1.

The protein resides in the cell junction. It localises to the focal adhesion. The protein localises to the cell projection. It is found in the ruffle. Its subcellular location is the cytoplasm. The protein resides in the cell cortex. It localises to the lamellipodium. In terms of biological role, acts as a RAC1 guanine nucleotide exchange factor (GEF) and can induce membrane ruffling. Functions in cell migration, attachment and cell spreading. Promotes targeting of RAC1 to focal adhesions. May function as a positive regulator of apoptosis. Downstream of NMDA receptors and CaMKK-CaMK1 signaling cascade, promotes the formation of spines and synapses in hippocampal neurons. This is Rho guanine nucleotide exchange factor 7 (ARHGEF7) from Homo sapiens (Human).